The chain runs to 39 residues: Cytochrome b559 subunit beta (39 aa).

Residues 14–30 (WLAIHGLAVPTVFSLGS) form a helical membrane-spanning segment. Position 18 (H18) interacts with heme.

It belongs to the PsbE/PsbF family. Heterodimer of an alpha subunit and a beta subunit. PSII is composed of 1 copy each of membrane proteins PsbA, PsbB, PsbC, PsbD, PsbE, PsbF, PsbH, PsbI, PsbJ, PsbK, PsbL, PsbM, PsbT, PsbX, PsbY, PsbZ, Psb30/Ycf12, at least 3 peripheral proteins of the oxygen-evolving complex and a large number of cofactors. It forms dimeric complexes. Requires heme b as cofactor.

It is found in the plastid. The protein localises to the chloroplast thylakoid membrane. This b-type cytochrome is tightly associated with the reaction center of photosystem II (PSII). PSII is a light-driven water:plastoquinone oxidoreductase that uses light energy to abstract electrons from H(2)O, generating O(2) and a proton gradient subsequently used for ATP formation. It consists of a core antenna complex that captures photons, and an electron transfer chain that converts photonic excitation into a charge separation. The polypeptide is Cytochrome b559 subunit beta (Huperzia lucidula (Shining clubmoss)).